We begin with the raw amino-acid sequence, 156 residues long: Small ribosomal subunit protein uS7 (156 aa).

It belongs to the universal ribosomal protein uS7 family. In terms of assembly, part of the 30S ribosomal subunit. Contacts proteins S9 and S11.

One of the primary rRNA binding proteins, it binds directly to 16S rRNA where it nucleates assembly of the head domain of the 30S subunit. Is located at the subunit interface close to the decoding center, probably blocks exit of the E-site tRNA. The polypeptide is Small ribosomal subunit protein uS7 (Nitratidesulfovibrio vulgaris (strain ATCC 29579 / DSM 644 / CCUG 34227 / NCIMB 8303 / VKM B-1760 / Hildenborough) (Desulfovibrio vulgaris)).